Here is a 63-residue protein sequence, read N- to C-terminus: DNA-directed RNA polymerase 7 kDa subunit (63 aa).

Belongs to the poxviridae DNA-directed RNA polymerase 7 kDa subunit family. In terms of assembly, the DNA-dependent RNA polymerase used for intermediate and late genes expression consists of eight subunits 147 kDa, 133 kDa, 35 kDa, 30 kDa, 22 kDa, 19 kDa, 18 kDa and 7 kDa totalling more than 500 kDa in mass. The same holoenzyme, with the addition of the transcription-specificity factor RAP94, is used for early gene expression.

Its subcellular location is the virion. The catalysed reaction is RNA(n) + a ribonucleoside 5'-triphosphate = RNA(n+1) + diphosphate. In terms of biological role, part of the DNA-dependent RNA polymerase which catalyzes the transcription of viral DNA into RNA using the four ribonucleoside triphosphates as substrates. Responsible for the transcription of early, intermediate and late genes. DNA-dependent RNA polymerase associates with the early transcription factor (ETF) thereby allowing the early genes transcription. Late transcription, and probably also intermediate transcription, require newly synthesized RNA polymerase. The chain is DNA-directed RNA polymerase 7 kDa subunit (RPO7) from Fowlpox virus (strain NVSL) (FPV).